We begin with the raw amino-acid sequence, 208 residues long: MARLNVKPTRMELSNLKNRLKTATRGHKLLKDKRDELMRRFVDLIRENNELRQTIEKELAANMKEFVLAKASENSLMVEELFAVPVHEVTLWIDIENIMSVNVPKFHVQSNTAREQEQGEFAYSYLSSNSEMDNTIQKTKELLEKLLRLAEVEKTCQLMADDIEKTRRRVNGLEYSIIPQLEETIHYIELKLEEAERASLVRIMKITS.

It belongs to the V-ATPase D subunit family.

In terms of biological role, produces ATP from ADP in the presence of a proton gradient across the membrane. This Streptococcus pyogenes serotype M49 (strain NZ131) protein is V-type ATP synthase subunit D.